Reading from the N-terminus, the 152-residue chain is MSASSTAHSPLMSSEQIMNLLPHRYPFALVDRVLEHEPGKRAVAIKNITLNEPQFQGHFPGRPLMPGVLIVEAMAQVGGLIVTQMPDLPKGLFVFAGIDGVRFRRPVVPGDQLRITCELLSLKRQRFGKVRAQATVDGELVCSGELMFSLVD.

Residue H58 is part of the active site.

Belongs to the thioester dehydratase family. FabZ subfamily.

The protein resides in the cytoplasm. It catalyses the reaction a (3R)-hydroxyacyl-[ACP] = a (2E)-enoyl-[ACP] + H2O. Functionally, involved in unsaturated fatty acids biosynthesis. Catalyzes the dehydration of short chain beta-hydroxyacyl-ACPs and long chain saturated and unsaturated beta-hydroxyacyl-ACPs. This is 3-hydroxyacyl-[acyl-carrier-protein] dehydratase FabZ from Synechococcus sp. (strain RCC307).